A 201-amino-acid polypeptide reads, in one-letter code: Mediator of RNA polymerase II transcription subunit 19 (201 aa).

Residues 166–201 (GTGKSNAKKRKNRSNGSSMATPNSEMQDDVKRRRLE) are disordered.

The protein belongs to the Mediator complex subunit 19 family. As to quaternary structure, component of the Mediator complex.

It localises to the nucleus. Component of the Mediator complex, a coactivator involved in the regulated transcription of nearly all RNA polymerase II-dependent genes. Mediator functions as a bridge to convey information from gene-specific regulatory proteins to the basal RNA polymerase II transcription machinery. Mediator is recruited to promoters by direct interactions with regulatory proteins and serves as a scaffold for the assembly of a functional preinitiation complex with RNA polymerase II and the general transcription factors. This Candida glabrata (strain ATCC 2001 / BCRC 20586 / JCM 3761 / NBRC 0622 / NRRL Y-65 / CBS 138) (Yeast) protein is Mediator of RNA polymerase II transcription subunit 19 (ROX3).